A 185-amino-acid chain; its full sequence is Ribosome-recycling factor (185 aa).

This sequence belongs to the RRF family.

It is found in the cytoplasm. In terms of biological role, responsible for the release of ribosomes from messenger RNA at the termination of protein biosynthesis. May increase the efficiency of translation by recycling ribosomes from one round of translation to another. The protein is Ribosome-recycling factor of Shewanella sp. (strain W3-18-1).